The primary structure comprises 21 residues: 23S rRNA methylase leader peptide (21 aa).

In terms of biological role, involved in erythromycin resistance. The protein is 23S rRNA methylase leader peptide of Corynebacterium diphtheriae.